Consider the following 203-residue polypeptide: Endo-type membrane-bound lytic murein transglycosylase A (203 aa).

An N-terminal signal peptide occupies residues 1–15 (MKLRWFAFLIVLLAG). Cysteine 16 carries N-palmitoyl cysteine lipidation. Residue cysteine 16 is the site of S-diacylglycerol cysteine attachment.

It belongs to the transglycosylase Slt family.

The protein localises to the cell outer membrane. It carries out the reaction Endolytic cleavage of the (1-&gt;4)-beta-glycosidic linkage between N-acetylmuramic acid (MurNAc) and N-acetylglucosamine (GlcNAc) residues in peptidoglycan with concomitant formation of a 1,6-anhydrobond in the MurNAc residue.. Murein-degrading enzyme. May play a role in recycling of muropeptides during cell elongation and/or cell division. Preferentially cleaves at a distance of more than two disaccharide units from the ends of the glycan chain. This chain is Endo-type membrane-bound lytic murein transglycosylase A, found in Shigella boydii serotype 4 (strain Sb227).